The sequence spans 188 residues: NANOG neighbor homeobox (188 aa).

Residues 28 to 106 are disordered; sequence ETILANKKQS…NEKQKQYPEK (79 aa). The span at 57-106 shows a compositional bias: basic and acidic residues; that stretch reads QNGKQKWREEGEAGRKREREKEEKNEKELQDEQENKRKRENEKQKQYPEK. A DNA-binding region (homeobox) is located at residues 102–161; sequence QYPEKRLVSKSLMHTLWAKFKLNRCPTIQESLSLSFEFDMTHKQISQWFCKTRKKYNKEM.

It localises to the nucleus. The chain is NANOG neighbor homeobox (NANOGNB) from Homo sapiens (Human).